We begin with the raw amino-acid sequence, 255 residues long: tRNA uridine(34) hydroxylase (255 aa).

The Rhodanese domain maps to 131–225; that stretch reads AAPDTLVLDT…YLEEVPEAQS (95 aa). Cys-185 functions as the Cysteine persulfide intermediate in the catalytic mechanism.

It belongs to the TrhO family.

It catalyses the reaction uridine(34) in tRNA + AH2 + O2 = 5-hydroxyuridine(34) in tRNA + A + H2O. Catalyzes oxygen-dependent 5-hydroxyuridine (ho5U) modification at position 34 in tRNAs. The chain is tRNA uridine(34) hydroxylase from Bradyrhizobium diazoefficiens (strain JCM 10833 / BCRC 13528 / IAM 13628 / NBRC 14792 / USDA 110).